The chain runs to 687 residues: C-mannosyltransferase dpy-19 (687 aa).

A run of 11 helical transmembrane segments spans residues 24-44 (GISG…VGFL), 170-190 (ITGV…LGVL), 191-211 (VSDS…NHGE), 223-243 (ESFA…IIKY), 253-273 (LLIS…FAFF), 276-296 (ICSI…AKTI), 303-323 (AFFI…ALYF), 324-344 (PSIW…GIRL), 347-367 (LYLL…KVGF), 415-435 (LSST…SWDF), and 454-474 (GEVI…VLIM).

It belongs to the dpy-19 family.

It localises to the endoplasmic reticulum membrane. Functionally, C-mannosyltransferase that mediates C-mannosylation of tryptophan residues on target proteins such as unc-5 and mig-21. Mediates the attachment of alpha-mannose in C-C linkage to the C2 of the indole ring of tryptophan. C-mannosylation takes place in the endoplasmic reticulum and frequently found in thrombospondin (TSP) type-1 repeats and in the WSXWS motif of type I cytokine receptors. Required to orient neuroblasts QL and QR correctly on the anterior/posterior (A/P) axis: QL and QR are born in the same A/P position, but polarize and migrate left/right asymmetrically, QL migrates toward the posterior and QR migrates toward the anterior. Required with unc-40 to express mab-5 correctly in the Q cell descendants. The sequence is that of C-mannosyltransferase dpy-19 from Caenorhabditis briggsae.